We begin with the raw amino-acid sequence, 223 residues long: UPF0441 protein YgiB (223 aa).

The segment at 201–223 (ESVAKQSAMQRSAAGTSTRSMGG) is disordered. Over residues 204–223 (AKQSAMQRSAAGTSTRSMGG) the composition is skewed to polar residues.

It belongs to the UPF0441 family.

This chain is UPF0441 protein YgiB, found in Salmonella arizonae (strain ATCC BAA-731 / CDC346-86 / RSK2980).